The sequence spans 237 residues: Uridylate kinase (237 aa).

12 to 15 (KLSG) is an ATP binding site. The interval 20–25 (GENGYG) is involved in allosteric activation by GTP. A UMP-binding site is contributed by Gly-54. Gly-55 and Arg-59 together coordinate ATP. UMP contacts are provided by residues Asp-72 and 133-140 (TGNPYFST). Tyr-166 and Asp-169 together coordinate ATP.

This sequence belongs to the UMP kinase family. Homohexamer.

It localises to the cytoplasm. The enzyme catalyses UMP + ATP = UDP + ADP. The protein operates within pyrimidine metabolism; CTP biosynthesis via de novo pathway; UDP from UMP (UMPK route): step 1/1. With respect to regulation, allosterically activated by GTP. Inhibited by UTP. In terms of biological role, catalyzes the reversible phosphorylation of UMP to UDP. This chain is Uridylate kinase, found in Clostridium tetani (strain Massachusetts / E88).